The primary structure comprises 229 residues: Protein-L-isoaspartate O-methyltransferase (229 aa).

The active site involves serine 65.

Belongs to the methyltransferase superfamily. L-isoaspartyl/D-aspartyl protein methyltransferase family.

It is found in the cytoplasm. It catalyses the reaction [protein]-L-isoaspartate + S-adenosyl-L-methionine = [protein]-L-isoaspartate alpha-methyl ester + S-adenosyl-L-homocysteine. Catalyzes the methyl esterification of L-isoaspartyl residues in peptides and proteins that result from spontaneous decomposition of normal L-aspartyl and L-asparaginyl residues. It plays a role in the repair and/or degradation of damaged proteins. This chain is Protein-L-isoaspartate O-methyltransferase, found in Chlorobium phaeovibrioides (strain DSM 265 / 1930) (Prosthecochloris vibrioformis (strain DSM 265)).